A 231-amino-acid chain; its full sequence is 2-C-methyl-D-erythritol 4-phosphate cytidylyltransferase (231 aa).

Belongs to the IspD/TarI cytidylyltransferase family. IspD subfamily.

The enzyme catalyses 2-C-methyl-D-erythritol 4-phosphate + CTP + H(+) = 4-CDP-2-C-methyl-D-erythritol + diphosphate. The protein operates within isoprenoid biosynthesis; isopentenyl diphosphate biosynthesis via DXP pathway; isopentenyl diphosphate from 1-deoxy-D-xylulose 5-phosphate: step 2/6. Its function is as follows. Catalyzes the formation of 4-diphosphocytidyl-2-C-methyl-D-erythritol from CTP and 2-C-methyl-D-erythritol 4-phosphate (MEP). This is 2-C-methyl-D-erythritol 4-phosphate cytidylyltransferase from Clostridium novyi (strain NT).